Here is a 375-residue protein sequence, read N- to C-terminus: Ribosomal RNA large subunit methyltransferase G (375 aa).

This sequence belongs to the methyltransferase superfamily. RlmG family.

It localises to the cytoplasm. It catalyses the reaction guanosine(1835) in 23S rRNA + S-adenosyl-L-methionine = N(2)-methylguanosine(1835) in 23S rRNA + S-adenosyl-L-homocysteine + H(+). Functionally, specifically methylates the guanine in position 1835 (m2G1835) of 23S rRNA. This Stutzerimonas stutzeri (strain A1501) (Pseudomonas stutzeri) protein is Ribosomal RNA large subunit methyltransferase G.